The sequence spans 78 residues: Structural DNA-binding protein p10 (78 aa).

A compositionally biased stretch (low complexity) spans Met-1–Gly-27. A disordered region spans residues Met-1–Gly-41.

This sequence belongs to the asfivirus P10 family.

The protein localises to the virion. May play a role in genome packaging through direct interaction with viral DNA. Binds to ssDNA and dsDNA with the same apparent affinity in vitro. In African swine fever virus (strain Badajoz 1971 Vero-adapted) (Ba71V), this protein is Structural DNA-binding protein p10.